Reading from the N-terminus, the 485-residue chain is Ataxin-10 (485 aa).

This sequence belongs to the ataxin-10 family.

The protein resides in the cytoplasm. It localises to the perinuclear region. Its subcellular location is the midbody. Functionally, may play a role in the regulation of cytokinesis. May play a role in signaling by stimulating protein glycosylation. Induces neuritogenesis by activating the Ras-MAP kinase pathway and is necessary for the survival of cerebellar neurons. Does not appear to play a major role in ciliogenesis. The sequence is that of Ataxin-10 (atxn10) from Xenopus tropicalis (Western clawed frog).